Consider the following 884-residue polypeptide: Exocyst complex component 2 (884 aa).

A compositionally biased stretch (basic and acidic residues) spans 1–11 (MEENAQARERL). The disordered stretch occupies residues 1-27 (MEENAQARERLPPTVTGLSPTEGVPGT). The IPT/TIG domain occupies 13-98 (PTVTGLSPTE…GSSNVKFRVF (86 aa)). 2 coiled-coil regions span residues 178–206 (ADAT…SEEM) and 846–874 (NQRL…AENL).

Belongs to the SEC5 family. In terms of assembly, the exocyst complex is composed of sec-3/exoc1, sec-5/exoc2, sec-6/exoc3, sec-8/exoc4, sec-10/exoc5, sec-15/exoc6, exo-70/exoc7 and exo-84/exoc8.

Functionally, component of the exocyst complex involved in the docking of exocytic vesicles with fusion sites on the plasma membrane. This chain is Exocyst complex component 2 (sec-5), found in Caenorhabditis elegans.